A 249-amino-acid chain; its full sequence is Metallo-beta-lactamase type 2 (249 aa).

The signal sequence occupies residues 1–22 (MLKKIKISLILALGLTSLQAFG). Positions 98, 100, 102, 161, and 180 each coordinate Zn(2+). Lys-183 is a binding site for substrate. His-222 serves as a coordination point for Zn(2+).

The protein belongs to the metallo-beta-lactamase superfamily. Class-B beta-lactamase family. Monomer. It depends on Zn(2+) as a cofactor.

It localises to the periplasm. The enzyme catalyses a beta-lactam + H2O = a substituted beta-amino acid. Functionally, confers resistance to the different beta-lactams antibiotics (penicillin, cephalosporin and carbapenem) via the hydrolysis of the beta-lactam ring. The chain is Metallo-beta-lactamase type 2 (blaB2) from Elizabethkingia meningoseptica (Chryseobacterium meningosepticum).